A 1046-amino-acid chain; its full sequence is Translation initiation factor IF-2 (1046 aa).

The interval 49–450 is disordered; the sequence is ALQQGNGGKA…GVMLPRGNGQ (402 aa). Composition is skewed to low complexity over residues 57–80 and 89–106; these read KAAP…ARPA and PAAA…AAPA. A compositionally biased stretch (pro residues) spans 107 to 128; that stretch reads APGPRPGPKPAPRPAPAAPAPA. Over residues 129–169 the composition is skewed to low complexity; the sequence is APEFTAPPSAPAAPAAAASGPRPGARPGAPKPGGARPATPG. Residues 177-194 are compositionally biased toward basic and acidic residues; the sequence is RGERTDRGDRGDRGDRQG. Over residues 195–214 the composition is skewed to low complexity; that stretch reads AARPGGQAPRPGARPAGPRP. Composition is skewed to gly residues over residues 239-248 and 266-280; these read PRPGGAGAPG and GGPG…GPGG. The span at 302–318 shows a compositional bias: low complexity; the sequence is GNRPNPGMMPQRPAAGP. Residues 319-414 show a composition bias toward gly residues; it reads RPGGGGPGGR…GTQGAFGRPG (96 aa). The segment covering 418-427 has biased composition (basic residues); the sequence is RRGRKSKRQR. Residues 539-711 form the tr-type G domain; it reads ARPPVVTVMG…VVLTADASLD (173 aa). The interval 548-555 is G1; that stretch reads GHVDHGKT. 548–555 is a GTP binding site; it reads GHVDHGKT. Residues 573 to 577 form a G2 region; the sequence is GITQH. Positions 598–601 are G3; sequence DTPG. GTP-binding positions include 598–602 and 652–655; these read DTPGH and NKID. The G4 stretch occupies residues 652–655; it reads NKID. The segment at 688–690 is G5; sequence SAK.

Belongs to the TRAFAC class translation factor GTPase superfamily. Classic translation factor GTPase family. IF-2 subfamily.

It localises to the cytoplasm. One of the essential components for the initiation of protein synthesis. Protects formylmethionyl-tRNA from spontaneous hydrolysis and promotes its binding to the 30S ribosomal subunits. Also involved in the hydrolysis of GTP during the formation of the 70S ribosomal complex. This chain is Translation initiation factor IF-2, found in Streptomyces avermitilis (strain ATCC 31267 / DSM 46492 / JCM 5070 / NBRC 14893 / NCIMB 12804 / NRRL 8165 / MA-4680).